Here is a 279-residue protein sequence, read N- to C-terminus: Fatty-acid-binding protein 1 (279 aa).

Positions 103, 116, and 183 each coordinate dodecanoate.

It belongs to the chalcone isomerase family. As to expression, expressed in developing cotyledons, young seedlings, roots, seeds, embryos, macrospores, preanthesis and tapetum. Restricted to developing and reproductive tissues.

It localises to the plastid. Its subcellular location is the chloroplast stroma. Functionally, fatty-acid-binding protein. Interacts preferentially with saturated fatty acid. May be involved in alpha-linolenic (C18:3) metabolism. The chain is Fatty-acid-binding protein 1 (FAP1) from Arabidopsis thaliana (Mouse-ear cress).